A 307-amino-acid chain; its full sequence is Aspartate carbamoyltransferase catalytic subunit (307 aa).

2 residues coordinate carbamoyl phosphate: R54 and T55. K83 lines the L-aspartate pocket. Positions 104, 132, and 135 each coordinate carbamoyl phosphate. Positions 165 and 228 each coordinate L-aspartate. L267 and P268 together coordinate carbamoyl phosphate.

The protein belongs to the aspartate/ornithine carbamoyltransferase superfamily. ATCase family. As to quaternary structure, heterododecamer (2C3:3R2) of six catalytic PyrB chains organized as two trimers (C3), and six regulatory PyrI chains organized as three dimers (R2).

The enzyme catalyses carbamoyl phosphate + L-aspartate = N-carbamoyl-L-aspartate + phosphate + H(+). It functions in the pathway pyrimidine metabolism; UMP biosynthesis via de novo pathway; (S)-dihydroorotate from bicarbonate: step 2/3. Its function is as follows. Catalyzes the condensation of carbamoyl phosphate and aspartate to form carbamoyl aspartate and inorganic phosphate, the committed step in the de novo pyrimidine nucleotide biosynthesis pathway. This chain is Aspartate carbamoyltransferase catalytic subunit, found in Clostridium perfringens (strain ATCC 13124 / DSM 756 / JCM 1290 / NCIMB 6125 / NCTC 8237 / Type A).